The chain runs to 475 residues: Homeobox even-skipped homolog protein 2 (475 aa).

Disordered regions lie at residues 82–113 (PSSE…AEAD) and 155–189 (TSAS…SGAD). The segment covering 83-96 (SSESTVSSEIASAT) has biased composition (low complexity). The span at 160–186 (SGLGSLHGGGGGGNSGAAALGGSGSGS) shows a compositional bias: gly residues. Residues 191–250 (VRRYRTAFTREQIARLEKEFYRENYVSRPRRCELAAALNLPETTIKVWFQNRRMKDKRQR) constitute a DNA-binding region (homeobox).

This sequence belongs to the even-skipped homeobox family.

It is found in the nucleus. In Mus musculus (Mouse), this protein is Homeobox even-skipped homolog protein 2 (Evx2).